Consider the following 30-residue polypeptide: Brevinin-2Rg (30 aa).

Cysteines 24 and 30 form a disulfide.

Expressed by the skin glands.

It is found in the secreted. Its function is as follows. Antimicrobial peptide. In Pelophylax ridibundus (Marsh frog), this protein is Brevinin-2Rg.